Consider the following 343-residue polypeptide: Geranylgeranyl pyrophosphate synthase (343 aa).

Residues 1-12 are compositionally biased toward basic and acidic residues; sequence MAYTVEPREHSK. The tract at residues 1-26 is disordered; it reads MAYTVEPREHSKNTTLPTVAMPPSPP. Isopentenyl diphosphate-binding residues include Lys-69, Arg-72, and His-101. Asp-108 and Asp-112 together coordinate Mg(2+). Arg-117 contacts dimethylallyl diphosphate. Isopentenyl diphosphate is bound at residue Arg-118. Residues Thr-196 and Gln-229 each contribute to the dimethylallyl diphosphate site. Asp-232 contributes to the Mg(2+) binding site. Positions 236, 246, and 256 each coordinate dimethylallyl diphosphate.

Belongs to the FPP/GGPP synthase family. It depends on Mg(2+) as a cofactor.

The enzyme catalyses isopentenyl diphosphate + dimethylallyl diphosphate = (2E)-geranyl diphosphate + diphosphate. It carries out the reaction isopentenyl diphosphate + (2E)-geranyl diphosphate = (2E,6E)-farnesyl diphosphate + diphosphate. The catalysed reaction is isopentenyl diphosphate + (2E,6E)-farnesyl diphosphate = (2E,6E,10E)-geranylgeranyl diphosphate + diphosphate. Its pathway is mycotoxin biosynthesis. Functionally, geranylgeranyl pyrophosphate synthase; part of the gene cluster that mediates the biosynthesis of aphidicolin, a specific inhibitor of eukaryotic DNA synthesis and DNA polymerase alpha. The geranylgeranyl pyrophosphate synthase GGS is required for supplying a sufficient amount of geranylgeranyl diphosphate (GGDP), the general precursor of diterpenes. The diterpene synthase ACS then catalyzes the conversion of geranylgeranyl diphosphate to aphidicolan-16-beta-ol via the intermediate syn-copalyldiphosphate (syn-CDP). In addition to aphidicolan-16-beta-ol, the enzyme also produces low levels of amphidicol-15-ene and amphidicol-16-ene. The cytochrome P450 monooxygenase P450-2 then catalyzes the two-step hydroxylation from aphidicolan-16-beta-ol to 3-deoxyaphidicolin via a 17,3-deoxyaphidicolin intermediate. Finally, the cytochrome P450 monooxygenase P450-1 converts 3-deoxyaphidicolin to aphidicolin. This chain is Geranylgeranyl pyrophosphate synthase (GGS), found in Neocamarosporium betae (Beet black rot fungus).